A 226-amino-acid polypeptide reads, in one-letter code: High affinity heme transporter (226 aa).

An N-terminal signal peptide occupies residues 1 to 20; sequence MISLKIYFVLIFLFLKGINS. The tract at residues 72–101 is heme binding; sequence CDTTILSETNNVTGSCYVANCANDTVLEIC. Ser199 carries GPI-anchor amidated serine lipidation. A propeptide spans 200-226 (removed in mature form); it reads SASSTIFKPSYFISCLLSVGLYLVLNF.

Its subcellular location is the cell membrane. The protein localises to the vacuole membrane. In terms of biological role, high affinity heme transporter involved in the assimilation of exogenous heme during conditions of low cellular iron. In Schizosaccharomyces pombe (strain 972 / ATCC 24843) (Fission yeast), this protein is High affinity heme transporter.